The primary structure comprises 122 residues: UPF0102 protein CPR_1677 (122 aa).

Belongs to the UPF0102 family.

In Clostridium perfringens (strain SM101 / Type A), this protein is UPF0102 protein CPR_1677.